Consider the following 218-residue polypeptide: Imidazole glycerol phosphate synthase subunit HisH (218 aa).

One can recognise a Glutamine amidotransferase type-1 domain in the interval 12–218 (SIVVVDYGLG…RNFVDYCADQ (207 aa)). The active-site Nucleophile is the cysteine 88. Catalysis depends on residues histidine 196 and glutamate 198.

In terms of assembly, heterodimer of HisH and HisF.

The protein resides in the cytoplasm. The enzyme catalyses 5-[(5-phospho-1-deoxy-D-ribulos-1-ylimino)methylamino]-1-(5-phospho-beta-D-ribosyl)imidazole-4-carboxamide + L-glutamine = D-erythro-1-(imidazol-4-yl)glycerol 3-phosphate + 5-amino-1-(5-phospho-beta-D-ribosyl)imidazole-4-carboxamide + L-glutamate + H(+). The catalysed reaction is L-glutamine + H2O = L-glutamate + NH4(+). Its pathway is amino-acid biosynthesis; L-histidine biosynthesis; L-histidine from 5-phospho-alpha-D-ribose 1-diphosphate: step 5/9. IGPS catalyzes the conversion of PRFAR and glutamine to IGP, AICAR and glutamate. The HisH subunit catalyzes the hydrolysis of glutamine to glutamate and ammonia as part of the synthesis of IGP and AICAR. The resulting ammonia molecule is channeled to the active site of HisF. The chain is Imidazole glycerol phosphate synthase subunit HisH from Halobacterium salinarum (strain ATCC 700922 / JCM 11081 / NRC-1) (Halobacterium halobium).